The sequence spans 186 residues: dTTP/UTP pyrophosphatase (186 aa).

The active-site Proton acceptor is Asp-67.

This sequence belongs to the Maf family. YhdE subfamily. A divalent metal cation serves as cofactor.

The protein resides in the cytoplasm. It catalyses the reaction dTTP + H2O = dTMP + diphosphate + H(+). The catalysed reaction is UTP + H2O = UMP + diphosphate + H(+). In terms of biological role, nucleoside triphosphate pyrophosphatase that hydrolyzes dTTP and UTP. May have a dual role in cell division arrest and in preventing the incorporation of modified nucleotides into cellular nucleic acids. This chain is dTTP/UTP pyrophosphatase, found in Carboxydothermus hydrogenoformans (strain ATCC BAA-161 / DSM 6008 / Z-2901).